Reading from the N-terminus, the 411-residue chain is Proteasome-activating nucleotidase 2 (411 aa).

The stretch at 35-75 (IVAVNGELQAQLDDVEARREELREEVNRLQRENETLKTASL) forms a coiled coil. Residues 196–201 (GTGKTM) and histidine 335 each bind ATP. The tract at residues 408–411 (SYIQ) is docks into pockets in the proteasome alpha-ring to cause gate opening.

Belongs to the AAA ATPase family. In terms of assembly, homohexamer. The hexameric complex has a two-ring architecture resembling a top hat that caps the 20S proteasome core at one or both ends. Upon ATP-binding, the C-terminus of PAN interacts with the alpha-rings of the proteasome core by binding to the intersubunit pockets.

The protein localises to the cytoplasm. ATPase which is responsible for recognizing, binding, unfolding and translocation of substrate proteins into the archaeal 20S proteasome core particle. Is essential for opening the gate of the 20S proteasome via an interaction with its C-terminus, thereby allowing substrate entry and access to the site of proteolysis. Thus, the C-termini of the proteasomal ATPase function like a 'key in a lock' to induce gate opening and therefore regulate proteolysis. Unfolding activity requires energy from ATP hydrolysis, whereas ATP binding alone promotes ATPase-20S proteasome association which triggers gate opening, and supports translocation of unfolded substrates. This is Proteasome-activating nucleotidase 2 from Halobacterium salinarum (strain ATCC 700922 / JCM 11081 / NRC-1) (Halobacterium halobium).